The sequence spans 306 residues: Bacitracin transport ATP-binding protein BcrA (306 aa).

Residues 5–233 (IKTTDLTKMY…NRKYLEFQLS (229 aa)) form the ABC transporter domain. Position 37-44 (37-44 (GRNGAGKT)) interacts with ATP.

The protein belongs to the ABC transporter superfamily.

In terms of biological role, part of the binding-protein-dependent transport system for bacitracin that confer resistance to this antibiotic. Probably responsible for energy coupling to the transport system. The sequence is that of Bacitracin transport ATP-binding protein BcrA (bcrA) from Bacillus licheniformis.